The chain runs to 286 residues: Aminoglycoside N(3)-acetyltransferase VIII (286 aa).

The protein belongs to the antibiotic N-acetyltransferase family.

It catalyses the reaction a 2-deoxystreptamine antibiotic + acetyl-CoA = an N(3)-acetyl-2-deoxystreptamine antibiotic + CoA + H(+). Resistance to neomycin. In Streptomyces fradiae (Streptomyces roseoflavus), this protein is Aminoglycoside N(3)-acetyltransferase VIII (aacC8).